Consider the following 398-residue polypeptide: Acetate kinase (398 aa).

Asn8 provides a ligand contact to Mg(2+). Residue Lys15 participates in ATP binding. Residue Arg89 participates in substrate binding. Asp146 serves as the catalytic Proton donor/acceptor. Residues 206 to 210, 283 to 285, and 331 to 335 each bind ATP; these read HIGNG, DMR, and GMGEN. Glu383 contributes to the Mg(2+) binding site.

Belongs to the acetokinase family. As to quaternary structure, homodimer. Requires Mg(2+) as cofactor. It depends on Mn(2+) as a cofactor.

It is found in the cytoplasm. The enzyme catalyses acetate + ATP = acetyl phosphate + ADP. Its pathway is metabolic intermediate biosynthesis; acetyl-CoA biosynthesis; acetyl-CoA from acetate: step 1/2. Its function is as follows. Catalyzes the formation of acetyl phosphate from acetate and ATP. Can also catalyze the reverse reaction. This is Acetate kinase from Streptococcus pyogenes serotype M49 (strain NZ131).